A 279-amino-acid polypeptide reads, in one-letter code: Thymidylate synthase (279 aa).

Arg37 provides a ligand contact to dUMP. His67 provides a ligand contact to (6R)-5,10-methylene-5,6,7,8-tetrahydrofolate. Position 142–143 (142–143 (RR)) interacts with dUMP. Cys162 acts as the Nucleophile in catalysis. Residues 182-185 (RSAD), Asn193, and 223-225 (HLY) contribute to the dUMP site. (6R)-5,10-methylene-5,6,7,8-tetrahydrofolate is bound at residue Asp185. Ser278 contacts (6R)-5,10-methylene-5,6,7,8-tetrahydrofolate.

Belongs to the thymidylate synthase family. Bacterial-type ThyA subfamily. Homodimer.

The protein resides in the cytoplasm. The catalysed reaction is dUMP + (6R)-5,10-methylene-5,6,7,8-tetrahydrofolate = 7,8-dihydrofolate + dTMP. The protein operates within pyrimidine metabolism; dTTP biosynthesis. In terms of biological role, catalyzes the reductive methylation of 2'-deoxyuridine-5'-monophosphate (dUMP) to 2'-deoxythymidine-5'-monophosphate (dTMP) while utilizing 5,10-methylenetetrahydrofolate (mTHF) as the methyl donor and reductant in the reaction, yielding dihydrofolate (DHF) as a by-product. This enzymatic reaction provides an intracellular de novo source of dTMP, an essential precursor for DNA biosynthesis. The polypeptide is Thymidylate synthase (Caulobacter vibrioides (strain ATCC 19089 / CIP 103742 / CB 15) (Caulobacter crescentus)).